The chain runs to 126 residues: MSDPRYQIDVSVTTRYLAAQSQPEQNRYAFSYTVTIVNNGQLPAKLLSRHWIITDGDGRVQEVRGAGVVGQQPDIAPGASHTYSSGTVMATQVGIMQGSYQMLAEDGKRFDATIAPFRLAVPGALH.

The region spanning Ser-2–His-126 is the ApaG domain.

In Ectopseudomonas mendocina (strain ymp) (Pseudomonas mendocina), this protein is Protein ApaG.